The following is a 284-amino-acid chain: MTKDYQDFQHLDNENDHHQLQRGPPPAPRLLQRLCSGFRLFLLSLGLSILLLVVVCVITSQNSQLREDLRVLRQNFSNFTVSTEDQVKALTTQGERVGRKMKLVESQLEKHQEDLREDHSRLLLHVKQLVSDVRSLSCQMAALRGNGSERICCPINWVEYEGSCYWFSSSVKPWTEADKYCQLENAHLVVVTSWEEQRFVQQHMGPLNTWIGLTDQNGPWKWVDGTDYETGFKNWRPGQPDDWYGHGLGGGEDCAHFTTDGHWNDDVCRRPYRWVCETELGKAN.

Residues 1-39 (MTKDYQDFQHLDNENDHHQLQRGPPPAPRLLQRLCSGFR) lie on the Cytoplasmic side of the membrane. The Endocytosis signal signature appears at 5-8 (YQDF). Residue Cys35 is the site of S-palmitoyl cysteine attachment. The chain crosses the membrane as a helical; Signal-anchor for type II membrane protein span at residues 40–60 (LFLLSLGLSILLLVVVCVITS). Residues 58–122 (ITSQNSQLRE…EDLREDHSRL (65 aa)) adopt a coiled-coil conformation. Topologically, residues 61–284 (QNSQLREDLR…VCETELGKAN (224 aa)) are extracellular. Asn75, Asn78, and Asn146 each carry an N-linked (GlcNAc...) asparagine glycan. 3 cysteine pairs are disulfide-bonded: Cys153–Cys164, Cys181–Cys276, and Cys254–Cys268. One can recognise a C-type lectin domain in the interval 160-277 (YEGSCYWFSS…CRRPYRWVCE (118 aa)). The Ca(2+) site is built by Val190, Glu196, Asp215, Gln239, Asp241, Asp242, Glu252, Asp253, Asn264, Asp265, and Glu277.

As to quaternary structure, interacts with LASS2. In terms of processing, phosphorylated on a cytoplasmic Ser residue. In terms of tissue distribution, expressed exclusively in hepatic parenchymal cells.

Its subcellular location is the membrane. Functionally, mediates the endocytosis of plasma glycoproteins to which the terminal sialic acid residue on their complex carbohydrate moieties has been removed. The receptor recognizes terminal galactose and N-acetylgalactosamine units. After ligand binding to the receptor, the resulting complex is internalized and transported to a sorting organelle, where receptor and ligand are disassociated. The receptor then returns to the cell membrane surface. The sequence is that of Asialoglycoprotein receptor 1 (Asgr1) from Rattus norvegicus (Rat).